The chain runs to 350 residues: Membrane progestin receptor alpha (350 aa).

Residues 1–80 are Cytoplasmic-facing; that stretch reads MATMVAQKLS…HNEAVNVWTH (80 aa). The chain crosses the membrane as a helical span at residues 81 to 101; it reads LLAALVLLLRLAIFVGTVDFW. Over 102–105 the chain is Extracellular; that stretch reads GDPH. Residues 106–126 traverse the membrane as a helical segment; the sequence is ALPLFIIVLASFTYLSLSALA. The Cytoplasmic portion of the chain corresponds to 127 to 139; that stretch reads HLLQAKSEFWHYS. A helical transmembrane segment spans residues 140-160; it reads FFFLDYVGVAVYQFGSALAHF. At 161-165 the chain is on the extracellular side; sequence YYAIE. Residues 166-186 form a helical membrane-spanning segment; it reads PAWHAQVQTIFLPMAAFLAWL. Residues 187–239 lie on the Cytoplasmic side of the membrane; sequence SCTGSCYNKYIQKPGLLGRTCQEVPSALAYALDISPVAHRILASPEPATDDPA. A helical transmembrane segment spans residues 240-260; the sequence is LLYHKCQVVFFLLAAAFFSAF. Residues 261–278 are Extracellular-facing; the sequence is MPERWFPGSCHIFGQGHQ. Residues 279–299 form a helical membrane-spanning segment; it reads LFHVFLVLCTLAQLEAVALDY. The Cytoplasmic segment spans residues 300–318; that stretch reads EARRPIYEPLHTRWPHNFS. A helical transmembrane segment spans residues 319-339; sequence GLFLLTVGSSILTAFLLSQLV. The Extracellular portion of the chain corresponds to 340–350; it reads RRKLDLDRKTQ.

The protein belongs to the ADIPOR family.

Its subcellular location is the cell membrane. Functionally, plasma membrane progesterone (P4) receptor coupled to G proteins. Seems to act through a G(i) mediated pathway. May be involved in oocyte maturation. Involved in neurosteroid inhibition of apoptosis. Also binds dehydroepiandrosterone (DHEA), pregnanolone, pregnenolone and allopregnanolone. The protein is Membrane progestin receptor alpha (PAQR7) of Sus scrofa (Pig).